Consider the following 118-residue polypeptide: Small ribosomal subunit protein uS13 (118 aa).

The interval 92 to 118 (RRGLPVRGQRTKTNARTRKGPRKPIKK) is disordered.

The protein belongs to the universal ribosomal protein uS13 family. Part of the 30S ribosomal subunit. Forms a loose heterodimer with protein S19. Forms two bridges to the 50S subunit in the 70S ribosome.

Functionally, located at the top of the head of the 30S subunit, it contacts several helices of the 16S rRNA. In the 70S ribosome it contacts the 23S rRNA (bridge B1a) and protein L5 of the 50S subunit (bridge B1b), connecting the 2 subunits; these bridges are implicated in subunit movement. Contacts the tRNAs in the A and P-sites. The chain is Small ribosomal subunit protein uS13 from Yersinia enterocolitica serotype O:8 / biotype 1B (strain NCTC 13174 / 8081).